Reading from the N-terminus, the 91-residue chain is Large ribosomal subunit protein eL31 (91 aa).

The protein belongs to the eukaryotic ribosomal protein eL31 family.

The chain is Large ribosomal subunit protein eL31 from Pyrobaculum calidifontis (strain DSM 21063 / JCM 11548 / VA1).